A 664-amino-acid polypeptide reads, in one-letter code: Macoilin (664 aa).

4 helical membrane passes run 28–48, 75–95, 120–140, and 154–174; these read TFLY…DFVL, AFSV…LLFI, VCLP…AIRF, and FAAH…KSYV. Residues 253-265 show a composition bias toward basic and acidic residues; the sequence is REKGKEKDKDAKK. The segment at 253–274 is disordered; sequence REKGKEKDKDAKKHNLGINNNN. Phosphoserine is present on S305. The segment covering 320–348 has biased composition (polar residues); that stretch reads KNYKNASGVVNSSPRSHSATNGSIPSSSS. A disordered region spans residues 320 to 367; that stretch reads KNYKNASGVVNSSPRSHSATNGSIPSSSSKNEKKQKCTSKSPSAHKDL. N-linked (GlcNAc...) asparagine glycosylation is present at N324. Phosphoserine is present on S332. 2 N-linked (GlcNAc...) asparagine glycosylation sites follow: N340 and N452. A phosphoserine mark is found at S631 and S634. Residues 631–664 are disordered; that stretch reads SPLSPVSPHYSSKFVETSPSGLDPNASVYQPLKK. N-linked (GlcNAc...) asparagine glycosylation is present at N655.

Belongs to the macoilin family.

The protein resides in the rough endoplasmic reticulum membrane. It is found in the nucleus membrane. Functionally, plays a role in the regulation of neuronal activity. This Bos taurus (Bovine) protein is Macoilin (MACO1).